We begin with the raw amino-acid sequence, 522 residues long: MEKDNDFKDPFLASTEEEELDPATQKALMEYLGVGSRASSLVSFSSTAVDIPPISGVGDFVREFRIESRKLWKLAGPAIFTTMSQYSLGAVTQVFAGHISTLALAAVSIENSVIAGFSFGIMLGMGSALETLCGQAFGAGKVSMLGVYLQRSWVILSVTALFLSLIYIFAAPILTFIGQTAAISAMAGIFSIYMIPQIFAYAINFPTAKFLQSQSKIMVMAGISGVVLVIHSFFTWLVMSRLHWGLPGLALVLNTSWWVIVVAQLVYIFNCTCGEAWSGFTWEAFHNLWGFVKLSLASAAMLCLEIWYFMALVLFAGYLKNAEVSVAALSICMNILGWAAMVAFGTNAAVSVRVSNELGASHPRTAKFSLVVAVILSTAIGMFIAAGLLFFRNEYPVLFVEDEEVRNVVRELTPMLAFCIVINNVQPVLSGVAVGAGWQAVVAYVNIACYYLFGVPFGLLLGFKLEYGVMGIWWGMVTGTFVQSIVLTWMICKTNWEKEASMAEERIKEWGGVPAEKETLLN.

12 helical membrane-spanning segments follow: residues 89-109 (GAVT…AVSI), 113-133 (VIAG…ETLC), 154-174 (VILS…APIL), 183-203 (ISAM…AYAI), 217-237 (IMVM…FTWL), 249-269 (LALV…VYIF), 299-319 (AAML…AGYL), 324-344 (VSVA…MVAF), 371-391 (VVAV…LLFF), 415-435 (MLAF…VAVG), 441-461 (VVAY…GLLL), and 471-491 (GIWW…TWMI).

Belongs to the multi antimicrobial extrusion (MATE) (TC 2.A.66.1) family.

It is found in the membrane. In terms of biological role, positively mediates root hair elongation. The chain is Protein DETOXIFICATION 31 from Arabidopsis thaliana (Mouse-ear cress).